A 484-amino-acid polypeptide reads, in one-letter code: Glycogen synthase (484 aa).

Residue Lys-15 coordinates ADP-alpha-D-glucose.

The protein belongs to the glycosyltransferase 1 family. Bacterial/plant glycogen synthase subfamily.

It catalyses the reaction [(1-&gt;4)-alpha-D-glucosyl](n) + ADP-alpha-D-glucose = [(1-&gt;4)-alpha-D-glucosyl](n+1) + ADP + H(+). Its pathway is glycan biosynthesis; glycogen biosynthesis. Functionally, synthesizes alpha-1,4-glucan chains using ADP-glucose. The polypeptide is Glycogen synthase (Syntrophotalea carbinolica (strain DSM 2380 / NBRC 103641 / GraBd1) (Pelobacter carbinolicus)).